The sequence spans 156 residues: tRNA (cytidine(34)-2'-O)-methyltransferase (156 aa).

The S-adenosyl-L-methionine site is built by Gly-102, Leu-124, and Ser-132.

Belongs to the class IV-like SAM-binding methyltransferase superfamily. RNA methyltransferase TrmH family. TrmL subfamily. In terms of assembly, homodimer.

It is found in the cytoplasm. The catalysed reaction is cytidine(34) in tRNA + S-adenosyl-L-methionine = 2'-O-methylcytidine(34) in tRNA + S-adenosyl-L-homocysteine + H(+). The enzyme catalyses 5-carboxymethylaminomethyluridine(34) in tRNA(Leu) + S-adenosyl-L-methionine = 5-carboxymethylaminomethyl-2'-O-methyluridine(34) in tRNA(Leu) + S-adenosyl-L-homocysteine + H(+). Its function is as follows. Methylates the ribose at the nucleotide 34 wobble position in the two leucyl isoacceptors tRNA(Leu)(CmAA) and tRNA(Leu)(cmnm5UmAA). Catalyzes the methyl transfer from S-adenosyl-L-methionine to the 2'-OH of the wobble nucleotide. This is tRNA (cytidine(34)-2'-O)-methyltransferase from Burkholderia pseudomallei (strain 1106a).